A 734-amino-acid polypeptide reads, in one-letter code: Photosystem I P700 chlorophyll a apoprotein A2 (734 aa).

The next 8 helical transmembrane spans lie at 46 to 69 (IFASHFGHLAVIFLWTSGNLFHVA), 135 to 158 (LYAGSLFLLFLAGVFLFAGWLHLQ), 175 to 199 (LNHHLSGLFGFSSLAWSAHLIHVAI), 273 to 291 (IAHHHLAIGVVFIFAGHMY), 330 to 353 (LHFQLGLALASLGVITSLVAQHMY), 369 to 395 (SALYTHHQYIAGFLMVGAFAHGAIFFV), 417 to 439 (AIISHLSWVSLFLGFHTLGIYVH), and 517 to 535 (FLIHHAIALALHTTTLILV). The [4Fe-4S] cluster site is built by cysteine 559 and cysteine 568. 2 consecutive transmembrane segments (helical) span residues 575-596 (AFYLSMFWMLNTIGWVTFYWHW) and 643-665 (LSVWSWMFLFGHLIWATGFMFLI). Chlorophyll a is bound by residues histidine 654, methionine 662, and tyrosine 670. Tryptophan 671 is a phylloquinone binding site. Residues 707–727 (LVGLIHFTAGYIFTYAAFVIA) traverse the membrane as a helical segment.

This sequence belongs to the PsaA/PsaB family. In terms of assembly, the PsaA/B heterodimer binds the P700 chlorophyll special pair and subsequent electron acceptors. PSI consists of a core antenna complex that captures photons, and an electron transfer chain that converts photonic excitation into a charge separation. The eukaryotic PSI reaction center is composed of at least 11 subunits. It depends on P700 is a chlorophyll a/chlorophyll a' dimer, A0 is one or more chlorophyll a, A1 is one or both phylloquinones and FX is a shared 4Fe-4S iron-sulfur center. as a cofactor.

The protein localises to the plastid. Its subcellular location is the chloroplast thylakoid membrane. It carries out the reaction reduced [plastocyanin] + hnu + oxidized [2Fe-2S]-[ferredoxin] = oxidized [plastocyanin] + reduced [2Fe-2S]-[ferredoxin]. In terms of biological role, psaA and PsaB bind P700, the primary electron donor of photosystem I (PSI), as well as the electron acceptors A0, A1 and FX. PSI is a plastocyanin/cytochrome c6-ferredoxin oxidoreductase, converting photonic excitation into a charge separation, which transfers an electron from the donor P700 chlorophyll pair to the spectroscopically characterized acceptors A0, A1, FX, FA and FB in turn. Oxidized P700 is reduced on the lumenal side of the thylakoid membrane by plastocyanin or cytochrome c6. The protein is Photosystem I P700 chlorophyll a apoprotein A2 of Rhodomonas salina (Cryptomonas salina).